Reading from the N-terminus, the 232-residue chain is Mitochondrial import inner membrane translocase subunit Tim21 (232 aa).

Residues M1–L31 constitute a mitochondrion transit peptide. The chain crosses the membrane as a helical span at residues F96–V116.

This sequence belongs to the TIM21 family.

It localises to the mitochondrion membrane. Functionally, may participate in the translocation of transit peptide-containing proteins across the mitochondrial inner membrane. The protein is Mitochondrial import inner membrane translocase subunit Tim21 (timm21) of Xenopus laevis (African clawed frog).